We begin with the raw amino-acid sequence, 138 residues long: Probable prefoldin subunit 4 (138 aa).

It belongs to the prefoldin subunit beta family. Heterohexamer of two PFD-alpha type and four PFD-beta type subunits.

Functionally, binds specifically to cytosolic chaperonin (c-CPN) and transfers target proteins to it. Binds to nascent polypeptide chain and promotes folding in an environment in which there are many competing pathways for nonnative proteins. The protein is Probable prefoldin subunit 4 of Drosophila melanogaster (Fruit fly).